Consider the following 137-residue polypeptide: Envelope glycoprotein L (137 aa).

The first 25 residues, 1 to 25 (MRAVGVFLATCLVTIFVLPTWGNWA), serve as a signal peptide directing secretion. Residues 23–128 (NWAYPCCHVT…SVEDLFGANL (106 aa)) are interaction with gH. Disulfide bonds link Cys28-Cys56 and Cys29-Cys79.

It belongs to the herpesviridae glycoprotein L family. As to quaternary structure, interacts with glycoprotein H (gH); this interaction is necessary for the correct processing and cell surface expression of gH. The heterodimer gH/gL seems to interact with gB trimers during fusion. The heterodimer gH/gL interacts with host EPHA2 to facilitate virus internalization and fusion.

It localises to the virion membrane. Its subcellular location is the host cell membrane. The protein resides in the host Golgi apparatus. It is found in the host trans-Golgi network. The heterodimer glycoprotein H-glycoprotein L is required for the fusion of viral and plasma membranes leading to virus entry into the host cell. Acts as a functional inhibitor of gH and maintains gH in an inhibited form. Upon binding to host integrins, gL dissociates from gH leading to activation of the viral fusion glycoproteins gB and gH. The heterodimer gH/gL targets also host EPHA2 to promote viral entry. This Homo sapiens (Human) protein is Envelope glycoprotein L.